The chain runs to 691 residues: Elongation factor G (691 aa).

The tr-type G domain maps to 8–282 (ERVRNIGIAA…AVVDYLPAPV (275 aa)). Residues 17–24 (AHIDAGKT), 81–85 (DTPGH), and 135–138 (NKMD) contribute to the GTP site.

Belongs to the TRAFAC class translation factor GTPase superfamily. Classic translation factor GTPase family. EF-G/EF-2 subfamily.

The protein localises to the cytoplasm. Its function is as follows. Catalyzes the GTP-dependent ribosomal translocation step during translation elongation. During this step, the ribosome changes from the pre-translocational (PRE) to the post-translocational (POST) state as the newly formed A-site-bound peptidyl-tRNA and P-site-bound deacylated tRNA move to the P and E sites, respectively. Catalyzes the coordinated movement of the two tRNA molecules, the mRNA and conformational changes in the ribosome. The polypeptide is Elongation factor G (Prochlorococcus marinus (strain AS9601)).